A 289-amino-acid chain; its full sequence is Energy-coupling factor transporter ATP-binding protein EcfA2 (289 aa).

Residues 3–246 (IQAKKLNYTY…PEWLKNHHLN (244 aa)) form the ABC transporter domain. Residue 40–47 (GHTGSGKS) coordinates ATP.

The protein belongs to the ABC transporter superfamily. Energy-coupling factor EcfA family. As to quaternary structure, forms a stable energy-coupling factor (ECF) transporter complex composed of 2 membrane-embedded substrate-binding proteins (S component), 2 ATP-binding proteins (A component) and 2 transmembrane proteins (T component).

The protein resides in the cell membrane. In terms of biological role, ATP-binding (A) component of a common energy-coupling factor (ECF) ABC-transporter complex. Unlike classic ABC transporters this ECF transporter provides the energy necessary to transport a number of different substrates. This is Energy-coupling factor transporter ATP-binding protein EcfA2 from Ligilactobacillus salivarius (strain UCC118) (Lactobacillus salivarius).